A 95-amino-acid chain; its full sequence is uncharacterized protein (95 aa).

A run of 2 repeats spans residues 67-74 and 85-92. The 2 X 8 AA approximate repeats stretch occupies residues 67 to 92; that stretch reads GCGCGCGCATVAAVSPVPCGGCCGCG.

This is an uncharacterized protein from Caenorhabditis elegans.